Consider the following 583-residue polypeptide: Membrane-bound O-acyltransferase gup1 (583 aa).

Residues 1–52 (MLRLFRFDVLETSTKDTERPNSKSSRLSSTSGSSHPSSSSRLTVRSAVPEKS) lie on the Extracellular side of the membrane. Residues 15 to 42 (KDTERPNSKSSRLSSTSGSSHPSSSSRL) are disordered. Over residues 22 to 40 (SKSSRLSSTSGSSHPSSSS) the composition is skewed to low complexity. Residues 53–73 (AFGSIEFIFYFSVILSILTIA) traverse the membrane as a helical segment. Topologically, residues 74 to 119 (CFKIHYVSSPKHPNYKNIEKYLKPGWLFGQKVDSADFQYSAFRENM) are cytoplasmic. Residues 120–140 (PILLLVIIVYNFLWRLVKLVF) form a helical membrane-spanning segment. The Extracellular segment spans residues 141–159 (TKNTNDELAIKNNYRLCFS). The helical transmembrane segment at 160–180 (LLFALLVYGTGVIYVLTIALI) threads the bilayer. The Cytoplasmic portion of the chain corresponds to 181–191 (NYLISKSLKNS). A helical membrane pass occupies residues 192–212 (IFNPLLTWTLDISVVFFKEYF). At 213–298 (AYCKFSSLHP…SCLDEDYNLK (86 aa)) the chain is on the extracellular side. The helical transmembrane segment at 299–319 (NFLTYIFYAPLYLAGPIISFN) threads the bilayer. At 320 to 343 (NFMSQMKYPTVSTLKYRNLLYAIR) the chain is on the cytoplasmic side. A helical transmembrane segment spans residues 344–364 (FLVCVLTMEFLLHYAYVTAIS). Residues 365–373 (KDGNWNQYS) are Extracellular-facing. A helical membrane pass occupies residues 374–394 (AVESAMISFIVLFMTWLKLLI). At 395–444 (PWRLFRLWSLIDDIEPPENIVRCMCNNYSAVGFWRAWHRSFNRWLIRYIY) the chain is on the cytoplasmic side. 2 consecutive transmembrane segments (helical) span residues 445-465 (VPLGGSNHSILNLFIIFTFVA) and 466-486 (LWHDISWELFAWGWLIVLFIL). H468 is an active-site residue. The Cytoplasmic segment spans residues 487–512 (PERLCCFMSRRTGLTKHPYYRYISGF). The chain crosses the membrane as a helical span at residues 513-533 (GAALNIYFMIICNLIGFAVGI). Over 534 to 549 (DGIKNVLVSFFLTLKG) the chain is Extracellular. Residues 550–570 (AMSAIAAFIMFFSAVQIMFQI) traverse the membrane as a helical segment. Residues 571–583 (RVNEEEEGINLRC) are Cytoplasmic-facing.

This sequence belongs to the membrane-bound acyltransferase family.

The protein resides in the cell membrane. Its subcellular location is the endoplasmic reticulum membrane. It is found in the mitochondrion membrane. Membrane-bound O-acyltransferase involved in the remodeling of glycosylphosphatidylinositol (GPI) anchors. Acts only on GPI-anchored proteins, but not on free GPI lipids. Also involved in lipid metabolism, having profound effects on sphingolipid-sterol-ordered domains integrity and assembly. Involved in cell integrity and apoptosis. This Schizosaccharomyces pombe (strain 972 / ATCC 24843) (Fission yeast) protein is Membrane-bound O-acyltransferase gup1 (gup1).